Reading from the N-terminus, the 203-residue chain is FMN-dependent NADH:quinone oxidoreductase (203 aa).

FMN-binding positions include Ser-9, 15–17 (SVS), and 138–141 (SRGG).

This sequence belongs to the azoreductase type 1 family. As to quaternary structure, homodimer. Requires FMN as cofactor.

The enzyme catalyses 2 a quinone + NADH + H(+) = 2 a 1,4-benzosemiquinone + NAD(+). It catalyses the reaction N,N-dimethyl-1,4-phenylenediamine + anthranilate + 2 NAD(+) = 2-(4-dimethylaminophenyl)diazenylbenzoate + 2 NADH + 2 H(+). In terms of biological role, quinone reductase that provides resistance to thiol-specific stress caused by electrophilic quinones. Also exhibits azoreductase activity. Catalyzes the reductive cleavage of the azo bond in aromatic azo compounds to the corresponding amines. The sequence is that of FMN-dependent NADH:quinone oxidoreductase from Methylorubrum extorquens (strain PA1) (Methylobacterium extorquens).